The following is a 190-amino-acid chain: Adenylate kinase (190 aa).

ATP is bound at residue Gly12–Thr17. The NMP stretch occupies residues Ser34–Val63. Residues Thr35, Arg40, Asn61–Val63, Gly88–Arg91, and Gln95 contribute to the AMP site. Residues Gly130–Asp136 form an LID region. An ATP-binding site is contributed by Arg131. AMP contacts are provided by Arg133 and Arg145. An ATP-binding site is contributed by Arg173.

Belongs to the adenylate kinase family. In terms of assembly, monomer.

Its subcellular location is the cytoplasm. It catalyses the reaction AMP + ATP = 2 ADP. It participates in purine metabolism; AMP biosynthesis via salvage pathway; AMP from ADP: step 1/1. Functionally, catalyzes the reversible transfer of the terminal phosphate group between ATP and AMP. Plays an important role in cellular energy homeostasis and in adenine nucleotide metabolism. The protein is Adenylate kinase of Wolinella succinogenes (strain ATCC 29543 / DSM 1740 / CCUG 13145 / JCM 31913 / LMG 7466 / NCTC 11488 / FDC 602W) (Vibrio succinogenes).